A 424-amino-acid chain; its full sequence is Inhibin beta A chain (424 aa).

Positions Met1–Ser20 are cleaved as a signal peptide. Positions Ser21 to Arg308 are excised as a propeptide. A glycan (N-linked (GlcNAc...) asparagine) is linked at Asn165. Disordered stretches follow at residues Gln178 to Glu200 and Lys260 to Arg288. Residues Lys263–Gly275 show a composition bias toward basic and acidic residues. Intrachain disulfides connect Cys312–Cys320, Cys319–Cys389, Cys348–Cys421, and Cys352–Cys423.

The protein belongs to the TGF-beta family. In terms of assembly, dimeric, linked by one or more disulfide bonds. Inhibin A is a dimer of alpha and beta-A. Inhibin B is a dimer of alpha and beta-B. Activin A is a homodimer of beta-A. Activin B is a homodimer of beta-B. Activin AB is a dimer of beta-A and beta-B. Ciliary ganglion neurons. Levels are higher in the choroid than the iris.

It localises to the secreted. In terms of biological role, inhibins and activins inhibit and activate, respectively, the secretion of follitropin by the pituitary gland. Inhibins/activins are involved in regulating a number of diverse functions such as hypothalamic and pituitary hormone secretion, gonadal hormone secretion, germ cell development and maturation, erythroid differentiation, insulin secretion, nerve cell survival, embryonic axial development or bone growth, depending on their subunit composition. Inhibins appear to oppose the functions of activins. Induces somatostatin in the ciliary ganglion neurons and may play a role in regulating neurotransmitter phenotype. This chain is Inhibin beta A chain (INHBA), found in Gallus gallus (Chicken).